The chain runs to 273 residues: Putative pyruvate, phosphate dikinase regulatory protein 2 (273 aa).

151-158 lines the ADP pocket; that stretch reads GVSRTSKT.

Belongs to the pyruvate, phosphate/water dikinase regulatory protein family. PDRP subfamily.

It carries out the reaction N(tele)-phospho-L-histidyl/L-threonyl-[pyruvate, phosphate dikinase] + ADP = N(tele)-phospho-L-histidyl/O-phospho-L-threonyl-[pyruvate, phosphate dikinase] + AMP + H(+). The catalysed reaction is N(tele)-phospho-L-histidyl/O-phospho-L-threonyl-[pyruvate, phosphate dikinase] + phosphate + H(+) = N(tele)-phospho-L-histidyl/L-threonyl-[pyruvate, phosphate dikinase] + diphosphate. Bifunctional serine/threonine kinase and phosphorylase involved in the regulation of the pyruvate, phosphate dikinase (PPDK) by catalyzing its phosphorylation/dephosphorylation. The protein is Putative pyruvate, phosphate dikinase regulatory protein 2 of Syntrophomonas wolfei subsp. wolfei (strain DSM 2245B / Goettingen).